We begin with the raw amino-acid sequence, 173 residues long: Crossover junction endodeoxyribonuclease RuvC (173 aa).

Active-site residues include aspartate 8, glutamate 67, and aspartate 139. Mg(2+) is bound by residues aspartate 8, glutamate 67, and aspartate 139.

This sequence belongs to the RuvC family. In terms of assembly, homodimer which binds Holliday junction (HJ) DNA. The HJ becomes 2-fold symmetrical on binding to RuvC with unstacked arms; it has a different conformation from HJ DNA in complex with RuvA. In the full resolvosome a probable DNA-RuvA(4)-RuvB(12)-RuvC(2) complex forms which resolves the HJ. The cofactor is Mg(2+).

Its subcellular location is the cytoplasm. The enzyme catalyses Endonucleolytic cleavage at a junction such as a reciprocal single-stranded crossover between two homologous DNA duplexes (Holliday junction).. Functionally, the RuvA-RuvB-RuvC complex processes Holliday junction (HJ) DNA during genetic recombination and DNA repair. Endonuclease that resolves HJ intermediates. Cleaves cruciform DNA by making single-stranded nicks across the HJ at symmetrical positions within the homologous arms, yielding a 5'-phosphate and a 3'-hydroxyl group; requires a central core of homology in the junction. The consensus cleavage sequence is 5'-(A/T)TT(C/G)-3'. Cleavage occurs on the 3'-side of the TT dinucleotide at the point of strand exchange. HJ branch migration catalyzed by RuvA-RuvB allows RuvC to scan DNA until it finds its consensus sequence, where it cleaves and resolves the cruciform DNA. The chain is Crossover junction endodeoxyribonuclease RuvC from Shewanella amazonensis (strain ATCC BAA-1098 / SB2B).